The following is a 442-amino-acid chain: UDP-N-acetylmuramate--L-alanine ligase (442 aa).

Gly-109–Ser-115 contacts ATP.

It belongs to the MurCDEF family.

It localises to the cytoplasm. The enzyme catalyses UDP-N-acetyl-alpha-D-muramate + L-alanine + ATP = UDP-N-acetyl-alpha-D-muramoyl-L-alanine + ADP + phosphate + H(+). It functions in the pathway cell wall biogenesis; peptidoglycan biosynthesis. Its function is as follows. Cell wall formation. The sequence is that of UDP-N-acetylmuramate--L-alanine ligase from Streptococcus pyogenes serotype M6 (strain ATCC BAA-946 / MGAS10394).